Reading from the N-terminus, the 219-residue chain is Steroid receptor RNA activator 1 (219 aa).

2 disordered regions span residues 1–90 (MAEL…SSPV) and 192–219 (SLSSEENKEEKSTVAPENQTIPGFQPSS). Positions 23 to 32 (YGLQTQTGGT) are enriched in polar residues. Phosphoserine is present on serine 48. Over residues 55 to 76 (SGPPPVDHPPPSSKASRPPPMG) the composition is skewed to pro residues. The span at 192–203 (SLSSEENKEEKS) shows a compositional bias: basic and acidic residues. Positions 206–219 (APENQTIPGFQPSS) are enriched in polar residues.

Belongs to the SRA1 family. In terms of assembly, SRA1 RNA exists in a ribonucleoprotein complex containing NCOA1. The RNA also forms a complex with PUS1 and RARG in the nucleus. Interacts with AR. Expressed in various prostate cancer cell lines.

Its subcellular location is the nucleus. It localises to the cytoplasm. Functional RNA which acts as a transcriptional coactivator that selectively enhances steroid receptor-mediated transactivation ligand-independently through a mechanism involving the modulating N-terminal domain (AF-1) of steroid receptors. Also mediates transcriptional coactivation of steroid receptors ligand-dependently through the steroid-binding domain (AF-2). Enhances cellular proliferation and differentiation and promotes apoptosis in vivo. May play a role in tumorigenesis. This is Steroid receptor RNA activator 1 from Rattus norvegicus (Rat).